The chain runs to 350 residues: Very-long-chain 3-oxoacyl-CoA reductase (350 aa).

A helical transmembrane segment spans residues 20 to 40 (ALLFSLLFGVFKLTTFTLRFA). 7 residues coordinate NADP(+): Val-66, Asp-120, Asn-147, Tyr-221, Lys-225, Val-254, and Ser-256. Tyr-221 functions as the Proton donor in the catalytic mechanism. The Lowers pKa of active site Tyr role is filled by Lys-225.

This sequence belongs to the short-chain dehydrogenases/reductases (SDR) family.

It is found in the endoplasmic reticulum membrane. The enzyme catalyses a very-long-chain (3R)-3-hydroxyacyl-CoA + NADP(+) = a very-long-chain 3-oxoacyl-CoA + NADPH + H(+). The protein operates within lipid metabolism; fatty acid biosynthesis. Component of the microsomal membrane bound fatty acid elongation system, which produces the 26-carbon very long-chain fatty acids (VLCFA) from palmitate. Catalyzes the reduction of the 3-ketoacyl-CoA intermediate that is formed in each cycle of fatty acid elongation. VLCFAs serve as precursors for ceramide and sphingolipids. The polypeptide is Very-long-chain 3-oxoacyl-CoA reductase (Lodderomyces elongisporus (strain ATCC 11503 / CBS 2605 / JCM 1781 / NBRC 1676 / NRRL YB-4239) (Yeast)).